Here is a 37-residue protein sequence, read N- to C-terminus: Potassium channel toxin alpha-KTx 1.3 (37 aa).

Pyrrolidone carboxylic acid is present on glutamine 1. 3 cysteine pairs are disulfide-bonded: cysteine 7-cysteine 28, cysteine 13-cysteine 33, and cysteine 17-cysteine 35. Residues 26-33 are interaction with Ca(2+)-activated K(+) channels; sequence GKCMGKKC.

It belongs to the short scorpion toxin superfamily. Potassium channel inhibitor family. Alpha-KTx 01 subfamily. Expressed by the venom gland.

The protein localises to the secreted. Blocks selectively the high conductance calcium-activated (maxi-K) potassium channels (KCa1.1/KCNMA1). The chain is Potassium channel toxin alpha-KTx 1.3 from Hottentotta tamulus (Eastern Indian scorpion).